Consider the following 2172-residue polypeptide: DExH-box ATP-dependent RNA helicase DExH13 (2172 aa).

The disordered stretch occupies residues 20–83 (YKVNSSLVLN…KSKKKKERCD (64 aa)). The segment covering 30-73 (SDERRRDTHESSGEPESLRGRIDPKSFGDRVVRGRPHELDERLN) has biased composition (basic and acidic residues). Residues 515–698 (GTALFKADNI…FLRVDLKNGL (184 aa)) enclose the Helicase ATP-binding 1 domain. 528-535 (APTGAGKT) contributes to the ATP binding site. Residues 640-643 (DEIH) carry the DEIH box motif. One can recognise a Helicase C-terminal 1 domain in the interval 742-946 (GKHQVLIFVH…NAREACHWLG (205 aa)). The region spanning 1007–1308 (TDLGRIASYY…KWLDSPTVLP (302 aa)) is the SEC63 1 domain. One can recognise a Helicase ATP-binding 2 domain in the interval 1361 to 1538 (TVLYNTSDNV…WIGASSCGVF (178 aa)). 1374-1381 (APTGSGKT) serves as a coordination point for ATP. Residues 1480-1483 (DELH) carry the DELH box motif. A Helicase C-terminal 2 domain is found at 1575–1772 (AIVQHAKNKK…NFNAEVVARV (198 aa)). Positions 1840–2157 (PLNLGMIASY…YLGCDQEYSF (318 aa)) constitute an SEC63 2 domain.

Its subcellular location is the nucleus. It carries out the reaction ATP + H2O = ADP + phosphate + H(+). Functionally, RNA helicase that plays an essential role in pre-mRNA splicing as component of the U5 snRNP and U4/U6-U5 tri-snRNP complexes. Involved in spliceosome assembly, activation and disassembly. The polypeptide is DExH-box ATP-dependent RNA helicase DExH13 (Arabidopsis thaliana (Mouse-ear cress)).